Reading from the N-terminus, the 98-residue chain is Large ribosomal subunit protein uL23 (98 aa).

This sequence belongs to the universal ribosomal protein uL23 family. Part of the 50S ribosomal subunit. Contacts protein L29, and trigger factor when it is bound to the ribosome.

Its function is as follows. One of the early assembly proteins it binds 23S rRNA. One of the proteins that surrounds the polypeptide exit tunnel on the outside of the ribosome. Forms the main docking site for trigger factor binding to the ribosome. The chain is Large ribosomal subunit protein uL23 from Lactobacillus gasseri (strain ATCC 33323 / DSM 20243 / BCRC 14619 / CIP 102991 / JCM 1131 / KCTC 3163 / NCIMB 11718 / NCTC 13722 / AM63).